We begin with the raw amino-acid sequence, 328 residues long: D-cysteine desulfhydrase (328 aa).

Residue K51 is modified to N6-(pyridoxal phosphate)lysine.

This sequence belongs to the ACC deaminase/D-cysteine desulfhydrase family. As to quaternary structure, homodimer. It depends on pyridoxal 5'-phosphate as a cofactor.

The catalysed reaction is D-cysteine + H2O = hydrogen sulfide + pyruvate + NH4(+) + H(+). Functionally, catalyzes the alpha,beta-elimination reaction of D-cysteine and of several D-cysteine derivatives. It could be a defense mechanism against D-cysteine. The sequence is that of D-cysteine desulfhydrase from Salmonella typhi.